Here is a 55-residue protein sequence, read N- to C-terminus: Ribulose bisphosphate carboxylase large chain (55 aa).

Catalysis depends on His18, which acts as the Proton acceptor. The substrate site is built by Arg19 and His27.

Belongs to the RuBisCO large chain family. Type I subfamily. In terms of assembly, heterohexadecamer of 8 large chains and 8 small chains; disulfide-linked. The disulfide link is formed within the large subunit homodimers. It depends on Mg(2+) as a cofactor. The disulfide bond which can form in the large chain dimeric partners within the hexadecamer appears to be associated with oxidative stress and protein turnover.

It is found in the plastid. Its subcellular location is the chloroplast. It carries out the reaction 2 (2R)-3-phosphoglycerate + 2 H(+) = D-ribulose 1,5-bisphosphate + CO2 + H2O. It catalyses the reaction D-ribulose 1,5-bisphosphate + O2 = 2-phosphoglycolate + (2R)-3-phosphoglycerate + 2 H(+). Functionally, ruBisCO catalyzes two reactions: the carboxylation of D-ribulose 1,5-bisphosphate, the primary event in carbon dioxide fixation, as well as the oxidative fragmentation of the pentose substrate in the photorespiration process. Both reactions occur simultaneously and in competition at the same active site. This Vitis sp. (Grape) protein is Ribulose bisphosphate carboxylase large chain.